The following is a 422-amino-acid chain: MPGTSRHSGRDAGSALLSLHQEDQENVNPEKLAPAQQPRAQAVLKAGNVRGPAPQQKLKTRRVAPLKDLPINDEHVTAGPSWKAVSKQPAFTIHVDEAEETQKRPAELKETECEDALAFNAAVSLPGARKPLTPLDYPMDGSFESPHAMDMSIVLEDKPVNVNEVPDYQEDIHTYLREMEVKCKPKVGYMKRQPDITNSMRAILVDWLVEVGEEYKLQNETLHLAVNYIDRFLSSMSVLRGKLQLVGTAAMLLASKFEEIYPPEVAEFVYITDDTYSKKQVLRMEHLVLKVLAFDLAAPTVNQFLTQYFLHLQPANCKVESLAMFLGELSLIDADPYLKYLPSLIAGAAFHLALYTVTGQSWPESLAQQTGYTLESLKPCLVDLHQTYLKAPQHAQQSIREKYKHSKYHSVSLLNPPETLSV.

Residue Met-1 is modified to N-acetylmethionine. Positions 1-62 (MPGTSRHSGR…APQQKLKTRR (62 aa)) are disordered. Ser-5 bears the Phosphoserine mark.

Belongs to the cyclin family. Cyclin AB subfamily. As to quaternary structure, interacts with the CDK1 and CDK2 protein kinases to form serine/threonine kinase holoenzyme complexes. Interacts with CDK1 (hyperphosphorylated form in G1 and underphosphorylated forms in S and G2). Interacts with CDK2; the interaction increases from G1 to G2. Interacts (associated with CDK2 but not with CDK1) with SCAPER; regulates the activity of CCNA2/CDK2 by transiently maintaining CCNA2 in the cytoplasm. Forms a ternary complex with CDK2 and CDKN1B; CDKN1B inhibits the kinase activity of CDK2 through conformational rearrangements. Interacts with INCA1. (Microbial infection) Interacts with mouse cytomegalovirus/MCMV kinase M97; this interaction sequesters CCNA2 to the cytoplasm. Polyubiquitinated via 'Lys-11'-linked ubiquitin by the anaphase-promoting complex (APC/C), leading to its degradation by the proteasome. Deubiquitinated and stabilized by USP37 enables entry into S phase. Ubiquitinated during the G1 phase by the SCF(FBXO31) complex, leading to its proteasomal degradation. As to expression, ubiquitous. In the testis, expressed in germ cells and in the ovary, in both germline and somatic cells.

The protein resides in the nucleus. It localises to the cytoplasm. In terms of biological role, cyclin which controls both the G1/S and the G2/M transition phases of the cell cycle. Functions through the formation of specific serine/threonine kinase holoenzyme complexes with the cyclin-dependent protein kinases CDK1 and CDK2. The cyclin subunit confers the substrate specificity of these complexes and differentially interacts with and activates CDK1 and CDK2 throughout the cell cycle. This is Cyclin-A2 from Mus musculus (Mouse).